An 816-amino-acid chain; its full sequence is Sucrose synthase 2 (816 aa).

S15 is modified (phosphoserine). The GT-B glycosyltransferase stretch occupies residues 280 to 757 (MVFNVVILSP…GLQRIEEKYT (478 aa)).

The protein belongs to the glycosyltransferase 1 family. Plant sucrose synthase subfamily.

It carries out the reaction an NDP-alpha-D-glucose + D-fructose = a ribonucleoside 5'-diphosphate + sucrose + H(+). Its function is as follows. Sucrose-cleaving enzyme that provides UDP-glucose and fructose for various metabolic pathways. This Zea mays (Maize) protein is Sucrose synthase 2 (SUS1).